The following is a 262-amino-acid chain: MENDFPLKGKTVLVTRNKAQAASFQQKVEALGGKAVLTSLITFRRALPNDVAEQVREDLAAPGWLVFTSVNGADFFFSYLKENQLILPAHKKIAAVGEKTARRLKMHNVSVDVMPQEYIAEQLADALKQHAEPGETITVMKGNLSRDVIKQELVPLGFEVKEWVLYETIPDEEGIEALKDAAGQYSFDYVTFTSSSTVHTFMHVLGEELKKWKANGTACISIGPLTNDALLTYGITSHTPDTFTIDGMLELMCSMSREEERI.

The protein belongs to the uroporphyrinogen-III synthase family. Monomer.

The catalysed reaction is hydroxymethylbilane = uroporphyrinogen III + H2O. It participates in porphyrin-containing compound metabolism; protoporphyrin-IX biosynthesis; coproporphyrinogen-III from 5-aminolevulinate: step 3/4. In terms of biological role, catalyzes cyclization of the linear tetrapyrrole, hydroxymethylbilane, to the macrocyclic uroporphyrinogen III. In Bacillus subtilis (strain 168), this protein is Uroporphyrinogen-III synthase (hemD).